Consider the following 431-residue polypeptide: ORC1-type DNA replication protein 14 (431 aa).

Residues 62–66, Tyr219, and Arg231 each bind ATP; that span reads TGKSL.

The protein belongs to the CDC6/cdc18 family.

Functionally, involved in regulation of DNA replication. This is ORC1-type DNA replication protein 14 (cdc6n) from Haloarcula marismortui (strain ATCC 43049 / DSM 3752 / JCM 8966 / VKM B-1809) (Halobacterium marismortui).